We begin with the raw amino-acid sequence, 407 residues long: 5-aminolevulinate synthase 1 (407 aa).

Positions 21, 137, and 156 each coordinate substrate. The pyridoxal 5'-phosphate site is built by S189, H217, and T245. K248 is a catalytic residue. K248 carries the N6-(pyridoxal phosphate)lysine modification. Residues S277 and T278 each coordinate pyridoxal 5'-phosphate. Substrate is bound at residue T363.

Belongs to the class-II pyridoxal-phosphate-dependent aminotransferase family. In terms of assembly, homodimer. The cofactor is pyridoxal 5'-phosphate.

It carries out the reaction succinyl-CoA + glycine + H(+) = 5-aminolevulinate + CO2 + CoA. It functions in the pathway porphyrin-containing compound metabolism; protoporphyrin-IX biosynthesis; 5-aminolevulinate from glycine: step 1/1. The chain is 5-aminolevulinate synthase 1 (hemA) from Cereibacter sphaeroides (strain ATCC 17023 / DSM 158 / JCM 6121 / CCUG 31486 / LMG 2827 / NBRC 12203 / NCIMB 8253 / ATH 2.4.1.) (Rhodobacter sphaeroides).